The following is a 444-amino-acid chain: MFS-type transporter dbaD (444 aa).

A compositionally biased stretch (polar residues) spans methionine 1 to leucine 13. The segment at methionine 1 to proline 57 is disordered. N-linked (GlcNAc...) asparagine glycosylation occurs at asparagine 8. Positions aspartate 31 to threonine 44 are enriched in basic and acidic residues. A compositionally biased stretch (pro residues) spans proline 48 to proline 57. Transmembrane regions (helical) follow at residues leucine 62–methionine 82, tryptophan 107–tyrosine 127, alanine 134–lysine 154, valine 159–valine 179, threonine 192–leucine 212, tryptophan 223–methionine 243, methionine 267–isoleucine 287, methionine 301–methionine 323, phenylalanine 330–valine 350, leucine 356–leucine 376, and methionine 394–leucine 414. The N-linked (GlcNAc...) asparagine glycan is linked to asparagine 421. A helical transmembrane segment spans residues glycine 424 to valine 444.

The protein belongs to the major facilitator superfamily. Monocarboxylate porter (TC 2.A.1.13) family.

The protein resides in the cell membrane. MFS-type transporter; part of the gene cluster that mediates the biosynthesis of the antibiotic 2,4- dihydroxy-3-methyl-6-(2-oxopropyl)benzaldehyde (DHMBA) and its derivatives. Is probably involved in the transport of the metabolites to the environment. In Emericella nidulans (strain FGSC A4 / ATCC 38163 / CBS 112.46 / NRRL 194 / M139) (Aspergillus nidulans), this protein is MFS-type transporter dbaD.